Here is a 332-residue protein sequence, read N- to C-terminus: MTTRGLEDLDGGLGSCLPSDDLPFLEEPASGRRRESKARGTSRRADSSDWTHVLQDPVAAGAGDAGLKKMEKELAGKESTAGKAGTSPRIVPARRKPQAPPPLQPPPPPLQPPPRTPSDDLPWGDLTLNKCLVLASLVALLGSALQLCRDAVAGEVVAAPHPWVPPSSPPKKEASPAPKPPVLVSPSGSPQPKPGPPQARMQDEPELPGSPEATETRVERGGSISEASGEESVPLGDRGSQEKPRKEKPSKGEKLKKEKPRREKPRREDKSQVTGEPRQSLPRRWEAREGGRRPWGRDSRDLLEHGKLQAWAPRRRHDRDDRPRQKRGKGRD.

Residues 1 to 80 (MTTRGLEDLD…EKELAGKEST (80 aa)) form a mediates interaction with CACNA1S region. 2 disordered regions span residues 1–125 (MTTR…PWGD) and 159–332 (APHP…KGRD). Phosphothreonine is present on T51. The span at 66-76 (GLKKMEKELAG) shows a compositional bias: basic and acidic residues. Pro residues-rich tracts occupy residues 98-116 (QAPPPLQPPPPPLQPPPRT) and 177-197 (APKPPVLVSPSGSPQPKPGPP). Residues 221-232 (GGSISEASGEES) show a composition bias toward low complexity. Residues S223 and S228 each carry the phosphoserine modification. Composition is skewed to basic and acidic residues over residues 239–256 (GSQEKPRKEKPSKGEKLK) and 283–307 (RRWEAREGGRRPWGRDSRDLLEHGK).

In terms of assembly, interacts with CACNA1S, CACNB1 and calsequestrin. Specifically expressed in skeletal muscle. Detected in skeletal muscle and tongue (at protein level).

It localises to the sarcoplasmic reticulum membrane. It is found in the endoplasmic reticulum membrane. Its function is as follows. Involved in skeletal muscle excitation/contraction coupling (EC), probably acting as a regulator of the voltage-sensitive calcium channel CACNA1S. EC is a physiological process whereby an electrical signal (depolarization of the plasma membrane) is converted into a chemical signal, a calcium gradient, by the opening of ryanodine receptor calcium release channels. May regulate CACNA1S membrane targeting and activity. This chain is Junctional sarcoplasmic reticulum protein 1 (Jsrp1), found in Mus musculus (Mouse).